A 194-amino-acid chain; its full sequence is MTQRIASHSRKTAETDITATVNLDGTGTSAIETGVVFLDHMLTSFSRHSGIDVQLRCSGDLDVDDHHTVEDVALVLGKAIEEALGDKKGIERYGWAIIPMDEALARCSIDLGGRSYCVFKAEFRRPVIQGLSTEMVEHFFISLSRTMNANLHLAILEGQNTHHLIEALFKSLAYAMKQAVRVSGTRIPSTKESL.

It belongs to the imidazoleglycerol-phosphate dehydratase family.

It is found in the cytoplasm. It carries out the reaction D-erythro-1-(imidazol-4-yl)glycerol 3-phosphate = 3-(imidazol-4-yl)-2-oxopropyl phosphate + H2O. Its pathway is amino-acid biosynthesis; L-histidine biosynthesis; L-histidine from 5-phospho-alpha-D-ribose 1-diphosphate: step 6/9. The protein is Imidazoleglycerol-phosphate dehydratase of Chlorobaculum parvum (strain DSM 263 / NCIMB 8327) (Chlorobium vibrioforme subsp. thiosulfatophilum).